A 338-amino-acid chain; its full sequence is Heat-inducible transcription repressor HrcA (338 aa).

Belongs to the HrcA family.

Negative regulator of class I heat shock genes (grpE-dnaK-dnaJ and groELS operons). Prevents heat-shock induction of these operons. The chain is Heat-inducible transcription repressor HrcA from Bacillus thuringiensis (strain Al Hakam).